A 430-amino-acid polypeptide reads, in one-letter code: Adenylosuccinate synthetase (430 aa).

GTP is bound by residues 12 to 18 and 40 to 42; these read GDEGKGK and GHT. Catalysis depends on Asp13, which acts as the Proton acceptor. Asp13 and Gly40 together coordinate Mg(2+). IMP is bound by residues 13–16, 38–41, Thr130, Arg144, Gln224, Thr239, and Arg303; these read DEGK and NAGH. The active-site Proton donor is the His41. A substrate-binding site is contributed by 299 to 305; it reads TVTGRKR. Residues Arg305, 331–333, and 413–415 contribute to the GTP site; these read KLD and STS.

This sequence belongs to the adenylosuccinate synthetase family. In terms of assembly, homodimer. The cofactor is Mg(2+).

The protein localises to the cytoplasm. It catalyses the reaction IMP + L-aspartate + GTP = N(6)-(1,2-dicarboxyethyl)-AMP + GDP + phosphate + 2 H(+). The protein operates within purine metabolism; AMP biosynthesis via de novo pathway; AMP from IMP: step 1/2. Plays an important role in the de novo pathway of purine nucleotide biosynthesis. Catalyzes the first committed step in the biosynthesis of AMP from IMP. This chain is Adenylosuccinate synthetase, found in Cereibacter sphaeroides (strain KD131 / KCTC 12085) (Rhodobacter sphaeroides).